A 199-amino-acid chain; its full sequence is MLVPIVVEQTGRGERSYDIYSRLLKDRIVFLGGAIDDAISNLVIAQLLFLEAEDPDKDIHLYINSPGGVVTAGMAIYDTMRYIKAPVSTICVGQAASMGAFLLSGGEKGKRFSLTNSRIMIHQPLGGFQGQATDIHIHAQEILRMKKKLNELMAEHTGQPVEKLEADTERDYFMSGEDAKNYGIIDSIISRNTITGGSR.

Ser97 functions as the Nucleophile in the catalytic mechanism. Residue His122 is part of the active site.

Belongs to the peptidase S14 family. As to quaternary structure, fourteen ClpP subunits assemble into 2 heptameric rings which stack back to back to give a disk-like structure with a central cavity, resembling the structure of eukaryotic proteasomes.

It is found in the cytoplasm. It carries out the reaction Hydrolysis of proteins to small peptides in the presence of ATP and magnesium. alpha-casein is the usual test substrate. In the absence of ATP, only oligopeptides shorter than five residues are hydrolyzed (such as succinyl-Leu-Tyr-|-NHMec, and Leu-Tyr-Leu-|-Tyr-Trp, in which cleavage of the -Tyr-|-Leu- and -Tyr-|-Trp bonds also occurs).. In terms of biological role, cleaves peptides in various proteins in a process that requires ATP hydrolysis. Has a chymotrypsin-like activity. Plays a major role in the degradation of misfolded proteins. The polypeptide is ATP-dependent Clp protease proteolytic subunit (Geotalea uraniireducens (strain Rf4) (Geobacter uraniireducens)).